The chain runs to 263 residues: MGESALEPGPVPGAPAGGPVHAVTVVTLLEKLATMLEALRERQGGLAERQGGLAGSVRRIQSGLGALSRSHDTTSNTLAQLLAKAERVGSHADAAQERAVHRAAQVQRLEANHGLLVARGKLHVLLFKEETEIPARAFQKAPELLGPEDQLVLGPEQPEDEVGESSDEEPVESRAQRLRRTGLQKVQSLKRAFSSRKGSEAAQPTPVKPPRLGPVRNSEGPAEGQPAAQPAMEPVLPSALEPEPPQPTKEDPERPVLQIESAA.

An interaction with CAVIN1 region spans residues 1-84 (MGESALEPGP…SNTLAQLLAK (84 aa)). Positions 20–78 (VHAVTVVTLLEKLATMLEALRERQGGLAERQGGLAGSVRRIQSGLGALSRSHDTTSNTL) are leucine-zipper. A phosphoserine mark is found at Ser62 and Ser70. A Glycyl lysine isopeptide (Lys-Gly) (interchain with G-Cter in SUMO2) cross-link involves residue Lys128. The interaction with CAV1 stretch occupies residues 135-203 (ARAFQKAPEL…SSRKGSEAAQ (69 aa)). A disordered region spans residues 141 to 263 (APELLGPEDQ…RPVLQIESAA (123 aa)). The segment covering 157–170 (QPEDEVGESSDEEP) has biased composition (acidic residues). Phosphoserine occurs at positions 165, 166, 173, and 199. The span at 219-234 (EGPAEGQPAAQPAMEP) shows a compositional bias: low complexity.

Belongs to the CAVIN family. In terms of assembly, component of the CAVIN complex composed of CAVIN1, CAVIN2, CAVIN3 and CAVIN4. Interacts with PRKCD and with phosphatidylserine. Phosphatidylserine may form a bridge between PKC and PKC-binding partners and stabilize the binding. Interacts with PER2. Interacts with CAVIN1 and EPS15L1. Interacts (via leucine-zipper domain) with CAV1 in a cholesterol-sensitive manner. In terms of processing, in vitro, phosphorylated by PRKCD.

Its subcellular location is the cytoplasm. It is found in the membrane. It localises to the caveola. The protein localises to the cytosol. In terms of biological role, regulates the traffic and/or budding of caveolae. Plays a role in caveola formation in a tissue-specific manner. Required for the formation of caveolae in smooth muscle but not in the lung and heart endothelial cells. Regulates the equilibrium between cell surface-associated and cell surface-dissociated caveolae by promoting the rapid release of caveolae from the cell surface. Plays a role in the regulation of the circadian clock. Modulates the period length and phase of circadian gene expression and also regulates expression and interaction of the core clock components PER1/2 and CRY1/2. Seems to have an immune potentiation function, especially in the glioma. In Rattus norvegicus (Rat), this protein is Caveolae-associated protein 3.